The following is a 143-amino-acid chain: Nucleoside diphosphate kinase (143 aa).

ATP is bound by residues Lys-11, Phe-59, Arg-87, Thr-93, Arg-104, and Asn-114. His-117 (pros-phosphohistidine intermediate) is an active-site residue.

It belongs to the NDK family. Homotetramer. Requires Mg(2+) as cofactor.

The protein localises to the cytoplasm. The catalysed reaction is a 2'-deoxyribonucleoside 5'-diphosphate + ATP = a 2'-deoxyribonucleoside 5'-triphosphate + ADP. The enzyme catalyses a ribonucleoside 5'-diphosphate + ATP = a ribonucleoside 5'-triphosphate + ADP. Functionally, major role in the synthesis of nucleoside triphosphates other than ATP. The ATP gamma phosphate is transferred to the NDP beta phosphate via a ping-pong mechanism, using a phosphorylated active-site intermediate. The sequence is that of Nucleoside diphosphate kinase from Enterobacter sp. (strain 638).